Consider the following 446-residue polypeptide: Gamma-glutamyl phosphate reductase (446 aa).

The protein belongs to the gamma-glutamyl phosphate reductase family.

It is found in the cytoplasm. It catalyses the reaction L-glutamate 5-semialdehyde + phosphate + NADP(+) = L-glutamyl 5-phosphate + NADPH + H(+). It functions in the pathway amino-acid biosynthesis; L-proline biosynthesis; L-glutamate 5-semialdehyde from L-glutamate: step 2/2. Catalyzes the NADPH-dependent reduction of L-glutamate 5-phosphate into L-glutamate 5-semialdehyde and phosphate. The product spontaneously undergoes cyclization to form 1-pyrroline-5-carboxylate. The polypeptide is Gamma-glutamyl phosphate reductase (Sulfurihydrogenibium sp. (strain YO3AOP1)).